A 188-amino-acid chain; its full sequence is Ribosome-recycling factor (188 aa).

This sequence belongs to the RRF family.

It localises to the cytoplasm. Its function is as follows. Responsible for the release of ribosomes from messenger RNA at the termination of protein biosynthesis. May increase the efficiency of translation by recycling ribosomes from one round of translation to another. This Bradyrhizobium diazoefficiens (strain JCM 10833 / BCRC 13528 / IAM 13628 / NBRC 14792 / USDA 110) protein is Ribosome-recycling factor.